The following is a 612-amino-acid chain: Sulfite reductase [NADPH] flavoprotein alpha-component (612 aa).

One can recognise a Flavodoxin-like domain in the interval Val-64–Val-202. FMN-binding positions include Ser-70–Ala-75, Ser-117–Gly-120, and Leu-153–Cys-162. In terms of domain architecture, FAD-binding FR-type spans Thr-247–Pro-461. FAD-binding positions include Thr-335, Lys-369, Arg-399–Ser-402, Thr-417–Gly-419, Tyr-423, and Gly-432–Ser-435. NADP(+) is bound by residues Ser-532–Arg-533, Lys-538–Gln-542, and Asp-574. Tyr-612 is a binding site for FAD.

This sequence belongs to the NADPH-dependent sulphite reductase flavoprotein subunit CysJ family. The protein in the N-terminal section; belongs to the flavodoxin family. It in the C-terminal section; belongs to the flavoprotein pyridine nucleotide cytochrome reductase family. In terms of assembly, alpha(8)-beta(8). The alpha component is a flavoprotein, the beta component is a hemoprotein. It depends on FAD as a cofactor. FMN serves as cofactor.

The catalysed reaction is hydrogen sulfide + 3 NADP(+) + 3 H2O = sulfite + 3 NADPH + 4 H(+). Its pathway is sulfur metabolism; hydrogen sulfide biosynthesis; hydrogen sulfide from sulfite (NADPH route): step 1/1. Component of the sulfite reductase complex that catalyzes the 6-electron reduction of sulfite to sulfide. This is one of several activities required for the biosynthesis of L-cysteine from sulfate. The flavoprotein component catalyzes the electron flow from NADPH -&gt; FAD -&gt; FMN to the hemoprotein component. This chain is Sulfite reductase [NADPH] flavoprotein alpha-component, found in Yersinia pestis bv. Antiqua (strain Nepal516).